The following is a 131-amino-acid chain: Small ribosomal subunit protein uS19 (131 aa).

The protein belongs to the universal ribosomal protein uS19 family.

In terms of biological role, protein S19 forms a complex with S13 that binds strongly to the 16S ribosomal RNA. This is Small ribosomal subunit protein uS19 from Nitrosopumilus maritimus (strain SCM1).